Reading from the N-terminus, the 397-residue chain is Chorismate synthase (397 aa).

Residues arginine 40 and arginine 46 each coordinate NADP(+). FMN-binding positions include 129 to 131 (RSS), 257 to 258 (QA), glycine 302, 317 to 321 (KPISS), and arginine 343.

It belongs to the chorismate synthase family. In terms of assembly, homotetramer. The cofactor is FMNH2.

It catalyses the reaction 5-O-(1-carboxyvinyl)-3-phosphoshikimate = chorismate + phosphate. It functions in the pathway metabolic intermediate biosynthesis; chorismate biosynthesis; chorismate from D-erythrose 4-phosphate and phosphoenolpyruvate: step 7/7. Catalyzes the anti-1,4-elimination of the C-3 phosphate and the C-6 proR hydrogen from 5-enolpyruvylshikimate-3-phosphate (EPSP) to yield chorismate, which is the branch point compound that serves as the starting substrate for the three terminal pathways of aromatic amino acid biosynthesis. This reaction introduces a second double bond into the aromatic ring system. The protein is Chorismate synthase of Chlorobium phaeovibrioides (strain DSM 265 / 1930) (Prosthecochloris vibrioformis (strain DSM 265)).